The primary structure comprises 726 residues: Myb-like protein Z (726 aa).

Disordered stretches follow at residues 15 to 109 (DSND…SLSN), 124 to 149 (ASPS…YHPY), 161 to 239 (HYVS…TKQQ), and 272 to 303 (LIPS…NMRS). The segment covering 18-39 (DNNNNNNNNNNSNNNNNNNNNN) has biased composition (low complexity). The span at 45 to 80 (SSATSSPTGQDSTIDRPNSPSSSIKFTYPSKNSIVT) shows a compositional bias: polar residues. The segment covering 81 to 108 (SPSSLQLPSPSFSSSSSSSSSSSSSSLS) has biased composition (low complexity). Polar residues predominate over residues 124 to 147 (ASPSKSSENSPTIHTSSLSPNSYH). Residues 165-177 (NNNNNNNNNNNNN) show a composition bias toward low complexity. The span at 183 to 209 (SSELYNTSPSISSKTTPNGSSTNNSPF) shows a compositional bias: polar residues. Residues 221–239 (NNNNNNNNDRNENNTTKQQ) are compositionally biased toward low complexity. A Myb-like domain is found at 329–388 (IPIATRKLWSQEECCRLLEMVFQRDPQSVTSKESELRWRSIASTLGRTVTSTRKKYMRLM). The span at 516–651 (KQIQQQQKQK…NNNYRSSLSP (136 aa)) shows a compositional bias: low complexity. The interval 516-726 (KQIQQQQKQK…NNNNYNNYHN (211 aa)) is disordered. Residues 661–675 (QSPQQKSNNENQQNF) show a composition bias toward polar residues. Positions 709 to 726 (NLNNNNNNNNNNYNNYHN) are enriched in low complexity.

This Dictyostelium discoideum (Social amoeba) protein is Myb-like protein Z (mybZ).